The sequence spans 296 residues: Nucleotide-binding protein RSc0403 (296 aa).

Residue 8–15 (GMSGSGKS) coordinates ATP. Position 57-60 (57-60 (DIRS)) interacts with GTP. Residues 99-124 (TRRRHPLSIRNGRPDAGNPPSAAKGP) are disordered.

Belongs to the RapZ-like family.

Displays ATPase and GTPase activities. In Ralstonia nicotianae (strain ATCC BAA-1114 / GMI1000) (Ralstonia solanacearum), this protein is Nucleotide-binding protein RSc0403.